The primary structure comprises 793 residues: ABC transporter G family member 1 (793 aa).

Over residues 1-20 (MDSNNNNNNENEAFSGASES) the composition is skewed to low complexity. The interval 1–96 (MDSNNNNNNE…NNNQNNNIIN (96 aa)) is disordered. The segment covering 21 to 37 (SEFRKIVEENENEREFE) has biased composition (basic and acidic residues). Residues 59 to 68 (ETINPNISLD) are compositionally biased toward polar residues. The stretch at 67-102 (LDNNNNNNQNNQNNQNNNNNNNNQNNNIINNLNKKN) forms a coiled coil. A compositionally biased stretch (low complexity) spans 69–96 (NNNNNNQNNQNNQNNNNNNNNQNNNIIN). An ABC transporter domain is found at 123 to 364 (VQITEKGKKK…FNANGYHCSE (242 aa)). 156–163 (GPSGAGKT) provides a ligand contact to ATP. Acidic residues predominate over residues 382-398 (DQADSDDDDYNDEEEEI). A disordered region spans residues 382 to 457 (DQADSDDDDY…QSTDGRARRR (76 aa)). Residues 399 to 413 (GGGGGGSGGGAGGIE) show a composition bias toward gly residues. Over residues 421-437 (PTMNGSAVDNIKNNELK) the composition is skewed to polar residues. The segment covering 438 to 448 (QQQQQQQQQQQ) has biased composition (low complexity). The ABC transmembrane type-2 domain occupies 527-785 (MAFKVNLIQA…VLTFLVLKLK (259 aa)). 7 helical membrane passes run 533 to 553 (LIQA…LGLG), 563 to 583 (VVAF…IHVF), 610 to 630 (FMDA…VYWM), 647 to 667 (FVLM…LISS), 674 to 694 (VGTA…GFFI), 701 to 721 (GWLV…AAVI), and 764 to 784 (VWIL…VLKL).

The protein belongs to the ABC transporter superfamily. ABCG family.

It is found in the membrane. In Dictyostelium discoideum (Social amoeba), this protein is ABC transporter G family member 1 (abcG1).